Here is a 359-residue protein sequence, read N- to C-terminus: Histidinol-phosphate aminotransferase (359 aa).

Lys-217 is subject to N6-(pyridoxal phosphate)lysine.

It belongs to the class-II pyridoxal-phosphate-dependent aminotransferase family. Histidinol-phosphate aminotransferase subfamily. As to quaternary structure, homodimer. Pyridoxal 5'-phosphate serves as cofactor.

The catalysed reaction is L-histidinol phosphate + 2-oxoglutarate = 3-(imidazol-4-yl)-2-oxopropyl phosphate + L-glutamate. It functions in the pathway amino-acid biosynthesis; L-histidine biosynthesis; L-histidine from 5-phospho-alpha-D-ribose 1-diphosphate: step 7/9. In Salmonella typhi, this protein is Histidinol-phosphate aminotransferase.